Consider the following 362-residue polypeptide: E3 ubiquitin-protein ligase rififylin (362 aa).

Residues 17-37 (ETPPPQGARTQAYSNPGYSSF) are disordered. Over residues 24–37 (ARTQAYSNPGYSSF) the composition is skewed to polar residues. An FYVE-type zinc finger spans residues 41 to 93 (TGSEPSCKACGVHFASTTRKQTCLDCKKNFCMTCSSQEGNGPRLCLLCLRFRA). An SAP 1 domain is found at 101–120 (LMKMKVKDLRDYLSLHDIST). Residues 162–183 (LTQPQSSTVPPTSPGLPSSPAQ) are disordered. 4 positions are modified to phosphoserine: Ser-225, Ser-228, Ser-231, and Ser-239. One can recognise an SAP 2 domain in the interval 249-263 (IEGLTVRQLKEILAR). An RING-type zinc finger spans residues 315-350 (CKICMDSPIDCVLLECGHMVTCTKCGKRMNECPICR).

Interacts with CASP8 and CASP10. Interacts with RIPK1 (via protein kinase domain); involved in RIPK1 ubiquitination. Interacts with PRR5L. Interacts (via RING-type zinc finger) with p53/TP53; involved in p53/TP53 ubiquitination. Interacts (via RING-type zinc finger) with MDM2; the interaction stabilizes MDM2. Post-translationally, autoubiquitinated. In terms of processing, palmitoylated. Undergoes caspase-mediated cleavage upon death-receptor activation, by TNFSF10 for instance. May be mediated by the caspases CASP8 and CASP10 in a negative feedback loop. In terms of tissue distribution, ubiquitous. Detected in cerebrum, cerebellum, midbrain, brain stem, hippocampus, striatum, liver, heart, lung, kidney, muscle, spleen and testis.

The protein localises to the cytoplasm. It localises to the cytosol. Its subcellular location is the cell membrane. The protein resides in the recycling endosome membrane. It carries out the reaction S-ubiquitinyl-[E2 ubiquitin-conjugating enzyme]-L-cysteine + [acceptor protein]-L-lysine = [E2 ubiquitin-conjugating enzyme]-L-cysteine + N(6)-ubiquitinyl-[acceptor protein]-L-lysine.. Its pathway is protein modification; protein ubiquitination. Functionally, E3 ubiquitin-protein ligase that regulates several biological processes through the ubiquitin-mediated proteasomal degradation of various target proteins. Mediates 'Lys-48'-linked polyubiquitination of PRR5L and its subsequent proteasomal degradation thereby indirectly regulating cell migration through the mTORC2 complex. Also ubiquitinates the caspases CASP8 and CASP10, promoting their proteasomal degradation, to negatively regulate apoptosis downstream of death domain receptors. Also negatively regulates the tumor necrosis factor-mediated signaling pathway through targeting of RIPK1 to ubiquitin-mediated proteasomal degradation. Negatively regulates p53/TP53 through its direct ubiquitination and targeting to proteasomal degradation. Indirectly, may also negatively regulate p53/TP53 through ubiquitination and degradation of SFN. May also play a role in endocytic recycling. The protein is E3 ubiquitin-protein ligase rififylin of Rattus norvegicus (Rat).